Consider the following 317-residue polypeptide: Ubiquinone biosynthesis protein COQ9, mitochondrial (317 aa).

The N-terminal 46 residues, 1 to 46 (MAASVARVLKAAGGRQLLLMVARRRPVLRQPFLLMPRKFWGTSALR), are a transit peptide targeting the mitochondrion. Positions 45–97 (LRSEDQKQPPFSSTSAHAGTPEHAEEQYQQQQPPPRYTDQAGEESEGYESEEQ) are disordered. Positions 85–96 (AGEESEGYESEE) are enriched in acidic residues. Residue R243 coordinates a 1,2-diacylglycero-3-phosphoethanolamine.

The protein belongs to the COQ9 family. As to quaternary structure, homodimer. Heterodimer; two heterodimers of COQ7:COQ9 come together on the same side of the lipid pseudo-bilayer and form a curved tetramer with a hydrophobic surface suitable for membrane interaction. These two tetramers assemble into a soluble octamer with a pseudo-bilayer of lipids captured within. Interacts with COQ7; this interaction allows ubiquinone (CoQ) isoprene intermediates presentation to COQ7 and facilitates the COQ7-mediated hydroxylase step.

It is found in the mitochondrion. It functions in the pathway cofactor biosynthesis; ubiquinone biosynthesis. In terms of biological role, membrane-associated protein that warps the membrane surface to access and bind aromatic isoprenes with high specificity, including ubiquinone (CoQ) isoprene intermediates and presents them directly to COQ7, therefore facilitating the COQ7-mediated hydroxylase step. Participates in the biosynthesis of coenzyme Q, also named ubiquinone, an essential lipid-soluble electron transporter for aerobic cellular respiration. The chain is Ubiquinone biosynthesis protein COQ9, mitochondrial from Xenopus tropicalis (Western clawed frog).